The primary structure comprises 468 residues: MTDSRPVVTRFAPSPTGYLHIGGARTALFNWLFARGRNGKFLLRIEDTDRTRSTPEATEAILQGLRWLGLDWDGEPVSQFAGRERHAEVAHAMLENGTAYKCFSTTEEIEAFREQAKAEGRSTLFLSPWRDADPAGLPDAPYAIRLKAPRDGETVVRDAVQGDVTFGNAQLDDMVLLRSDGTPTYMLAVVVDDHDMGVTHVIRGDDHLTNAARQIQIYQAMGWDIPVFAHIPLIHGTDGKKLSKRHGAVGLHEYAAMGYPAAAMRNYLARLGWSHGDDELFDDAQAKAWFDLDGIGKAPARLDFKKLEHVSGWHIARMDDVELLDEIADFRAATGAEPLSERQVARLRPALGALKTKAKTLPALLEQAHFALIDRPVQIEEKAAAALDIVSRSILKELTAAVQNASWGRDELEAAAKQIGESHGLGLGKVAAPLRAALAGRSSTPSVFDMMLALGRDETLARMQDQAG.

Positions 13 to 23 (PSPTGYLHIGG) match the 'HIGH' region motif. The short motif at 241–245 (KLSKR) is the 'KMSKS' region element. Lys244 provides a ligand contact to ATP.

The protein belongs to the class-I aminoacyl-tRNA synthetase family. Glutamate--tRNA ligase type 1 subfamily. Monomer.

Its subcellular location is the cytoplasm. It carries out the reaction tRNA(Glu) + L-glutamate + ATP = L-glutamyl-tRNA(Glu) + AMP + diphosphate. Catalyzes the attachment of glutamate to tRNA(Glu) in a two-step reaction: glutamate is first activated by ATP to form Glu-AMP and then transferred to the acceptor end of tRNA(Glu). The polypeptide is Glutamate--tRNA ligase 2 (Paracoccus denitrificans (strain Pd 1222)).